Consider the following 227-residue polypeptide: Transmembrane emp24 domain-containing protein 1 (227 aa).

The first 23 residues, 1–23, serve as a signal peptide directing secretion; it reads MMAAGTALGLALWLLLPPVGVGG. The Extracellular portion of the chain corresponds to 24–194; the sequence is AGPPPIQDGE…LQEGNLERVN (171 aa). Positions 43 to 125 constitute a GOLD domain; the sequence is KQCFYQSAPA…EKLVFFELIF (83 aa). The stretch at 145–170 forms a coiled coil; the sequence is EILEVKMEDIKESIETMRIRLERSIQ. Residues 195 to 215 traverse the membrane as a helical segment; it reads FWSAVNVAVLLLVAVLQVCTL. Residues 216–227 are Cytoplasmic-facing; it reads KRFFQDKRPVPM. The short motif at 218–219 is the COPII vesicle coat-binding element; sequence FF. The COPI vesicle coat-binding motif lies at 218-227; the sequence is FFQDKRPVPM.

This sequence belongs to the EMP24/GP25L family. In terms of assembly, homodimer in endoplasmic reticulum, endoplasmic reticulum-Golgi intermediate compartment and cis-Golgi network. Interacts with IL1RL1. Interacts with RNF26; this interaction is important to modulate innate immune signaling through the cGAS-STING pathway.

Its subcellular location is the cell membrane. The protein resides in the endoplasmic reticulum membrane. The protein localises to the golgi apparatus. It localises to the cis-Golgi network membrane. It is found in the endoplasmic reticulum-Golgi intermediate compartment membrane. Potential role in vesicular protein trafficking, mainly in the early secretory pathway. May act as a cargo receptor at the lumenal side for incorporation of secretory cargo molecules into transport vesicles and may be involved in vesicle coat formation at the cytoplasmic side. Plays a positive role in IL-33-mediated IL-8 and IL-6 production by interacting with interleukin-33 receptor IL1RL1. Plays also a role in the modulation of innate immune signaling through the cGAS-STING pathway by interacting with RNF26. The protein is Transmembrane emp24 domain-containing protein 1 (TMED1) of Bos taurus (Bovine).